Here is a 468-residue protein sequence, read N- to C-terminus: Meiotically up-regulated gene 111 protein (468 aa).

The next 12 membrane-spanning stretches (helical) occupy residues 13–33 (LVLI…NSVT), 59–79 (IVSA…VPFY), 92–112 (VFTT…SILY), 116–136 (FPTC…ISGT), 158–178 (IVVL…LGSI), 190–210 (LISW…AVFF), 285–305 (PIPI…FFDI), 330–350 (FGSL…GFSV), 356–376 (TMLI…FATA), 382–402 (LALF…LVAA), 417–437 (ALLE…AFIV), and 446–466 (FFIG…LLLG).

Its subcellular location is the membrane. In terms of biological role, has a role in meiosis. This is Meiotically up-regulated gene 111 protein (mug111) from Schizosaccharomyces pombe (strain 972 / ATCC 24843) (Fission yeast).